Reading from the N-terminus, the 235-residue chain is Uridylate kinase (235 aa).

Residue 9–12 (KLSG) coordinates ATP. An involved in allosteric activation by GTP region spans residues 17 to 22 (GDQGYG). G51 contributes to the UMP binding site. G52 and R56 together coordinate ATP. UMP-binding positions include D71 and 132–139 (CGNPFFTT). The ATP site is built by T159, Y165, and D168.

The protein belongs to the UMP kinase family. As to quaternary structure, homohexamer.

It is found in the cytoplasm. The enzyme catalyses UMP + ATP = UDP + ADP. It functions in the pathway pyrimidine metabolism; CTP biosynthesis via de novo pathway; UDP from UMP (UMPK route): step 1/1. Allosterically activated by GTP. Inhibited by UTP. Functionally, catalyzes the reversible phosphorylation of UMP to UDP. The polypeptide is Uridylate kinase (Synechococcus sp. (strain WH7803)).